The primary structure comprises 644 residues: Macrolide export ATP-binding/permease protein MacB (644 aa).

One can recognise an ABC transporter domain in the interval 6 to 244; it reads LELDGVWRRF…SQATEAQPDG (239 aa). 42 to 49 provides a ligand contact to ATP; it reads GASGSGKS. The next 5 helical transmembrane spans lie at 271-291, 415-435, 517-537, 574-594, and 609-629; these read ALTM…IAIG, EAVG…GVVA, LSLL…IGVM, LVCL…SFVF, and VIAL…FLPA.

This sequence belongs to the ABC transporter superfamily. Macrolide exporter (TC 3.A.1.122) family. Homodimer.

It is found in the cell inner membrane. Its function is as follows. Non-canonical ABC transporter that contains transmembrane domains (TMD), which form a pore in the inner membrane, and an ATP-binding domain (NBD), which is responsible for energy generation. Confers resistance against macrolides. In Chromobacterium violaceum (strain ATCC 12472 / DSM 30191 / JCM 1249 / CCUG 213 / NBRC 12614 / NCIMB 9131 / NCTC 9757 / MK), this protein is Macrolide export ATP-binding/permease protein MacB.